Consider the following 530-residue polypeptide: Light-harvesting complex I LH38 proteins (530 aa).

It is found in the plastid. Its subcellular location is the chloroplast. In Euglena gracilis, this protein is Light-harvesting complex I LH38 proteins.